The primary structure comprises 317 residues: MFVRNALVVTGLLAALTQAAPAERNTSRHKLTVYWGAEDDTTTLDDVCNDSSYDVVNLAFLSHFFSGGGYPRMSIGNLDGPSRAQKKAGATGLQDGSSLVKSIKNCQSKGKPVILSMGGATDYSDVQLHSDAQGQQIANTVWDLFLGGTDHKELRPFGDVKLDGVDLDNETNDGTGYLAMAKQFKANFQKDTSKKYYITAAPQCPYPDQSEPLDVCRLLDWVQVQFYNNGNCNIAQSGFATAVKNWSRGIGSGVQLYIGALASGADGDEGYVDAAVLNRAIDQVKAMDLPNFGGAMLWEAQLAVNNGNYQKEIKANL.

Positions 1–19 are cleaved as a signal peptide; that stretch reads MFVRNALVVTGLLAALTQA. 3 N-linked (GlcNAc...) asparagine glycosylation sites follow: N25, N49, and N169. The GH18 domain maps to 29–317; it reads HKLTVYWGAE…NYQKEIKANL (289 aa). E170 functions as the Proton donor in the catalytic mechanism. The N-linked (GlcNAc...) asparagine glycan is linked to N245.

It belongs to the glycosyl hydrolase 18 family. Chitinase class III subfamily.

The protein localises to the secreted. The enzyme catalyses Random endo-hydrolysis of N-acetyl-beta-D-glucosaminide (1-&gt;4)-beta-linkages in chitin and chitodextrins.. In terms of biological role, secreted chitinase involved in the degradation of chitin, a component of the cell walls of fungi and exoskeletal elements of some animals (including worms and arthropods). Participates in the infection process and directly acts in the penetration process of the host cuticle. Involved in heat-shock adaptation. This is Endochitinase 3 (chi3) from Metarhizium robertsii (strain ARSEF 23 / ATCC MYA-3075) (Metarhizium anisopliae (strain ARSEF 23)).